The chain runs to 86 residues: Small ribosomal subunit protein bS16 (86 aa).

It belongs to the bacterial ribosomal protein bS16 family.

This is Small ribosomal subunit protein bS16 from Leptothrix cholodnii (strain ATCC 51168 / LMG 8142 / SP-6) (Leptothrix discophora (strain SP-6)).